The sequence spans 222 residues: U-scoloptoxin(11)-Sm5a (222 aa).

Belongs to the scoloptoxin-11 family. Post-translationally, contains 8 disulfide bonds. Expressed by the venom gland.

Its subcellular location is the secreted. The chain is U-scoloptoxin(11)-Sm5a from Scolopendra morsitans (Tanzanian blue ringleg centipede).